The chain runs to 3649 residues: N-(5-amino-5-carboxypentanoyl)-L-cysteinyl-D-valine synthase (3649 aa).

A domain 1 (adipate-activating) region spans residues 401 to 861 (SRDRAYVTYT…LAGHLESQGH (461 aa)). 3 Carrier domains span residues 783–860 (APLL…ESQG), 1859–1936 (APVS…QAAA), and 2909–2984 (APRD…LSGL). An O-(pantetheine 4'-phosphoryl)serine mark is found at serine 820, serine 1896, and serine 2944. Positions 1014 to 1937 (HHIILDGWSL…QAEHIQAAAL (924 aa)) are domain 2 (cysteine-activating). Residues 2079–2985 (HHSCFDGWSW…FVDNVLSGLA (907 aa)) are domain 3 (valine-activating). The For thioesterase activity role is filled by serine 3502.

This sequence belongs to the ATP-dependent AMP-binding enzyme family. Pantetheine 4'-phosphate serves as cofactor.

The catalysed reaction is L-2-aminoadipate + L-valine + L-cysteine + 3 ATP + H2O = N-[(5S)-5-amino-5-carboxypentanoyl]-L-cysteinyl-D-valine + 3 AMP + 3 diphosphate + 3 H(+). Its pathway is antibiotic biosynthesis; penicillin G biosynthesis; penicillin G from L-alpha-aminoadipate and L-cysteine and L-valine: step 1/3. Its function is as follows. Each of the constituent amino acids of the tripeptide acv are activated as aminoacyl-adenylates with peptide bonds formed through the participation of amino acid thioester intermediates. The polypeptide is N-(5-amino-5-carboxypentanoyl)-L-cysteinyl-D-valine synthase (pcbAB) (Amycolatopsis lactamdurans (Nocardia lactamdurans)).